The primary structure comprises 297 residues: ER membrane protein complex subunit 2-A (297 aa).

TPR repeat units follow at residues 87-120 (HRVKRLTGLRFEAMERYDDALQIYDRILQDDPTN), 155-188 (QEAWHELAELYINELDYAKAAFCLEELILTNPHN), and 192-225 (YQQFAEVKYTQGGLENLELSRKYFSQALKLNNHN).

Belongs to the EMC2 family. As to quaternary structure, component of the ER membrane protein complex (EMC).

The protein resides in the endoplasmic reticulum membrane. In terms of biological role, part of the endoplasmic reticulum membrane protein complex (EMC) that enables the energy-independent insertion into endoplasmic reticulum membranes of newly synthesized membrane proteins. Preferentially accommodates proteins with transmembrane domains that are weakly hydrophobic or contain destabilizing features such as charged and aromatic residues. Involved in the cotranslational insertion of multi-pass membrane proteins in which stop-transfer membrane-anchor sequences become ER membrane spanning helices. It is also required for the post-translational insertion of tail-anchored/TA proteins in endoplasmic reticulum membranes. By mediating the proper cotranslational insertion of N-terminal transmembrane domains in an N-exo topology, with translocated N-terminus in the lumen of the ER, controls the topology of multi-pass membrane proteins. By regulating the insertion of various proteins in membranes, it is indirectly involved in many cellular processes. This Xenopus laevis (African clawed frog) protein is ER membrane protein complex subunit 2-A (emc2-a).